The chain runs to 187 residues: Thermosensitive gluconokinase (187 aa).

10–17 provides a ligand contact to ATP; it reads GVSGSGKT.

Belongs to the gluconokinase GntK/GntV family.

It catalyses the reaction D-gluconate + ATP = 6-phospho-D-gluconate + ADP + H(+). It participates in carbohydrate acid metabolism; L-idonate degradation. The polypeptide is Thermosensitive gluconokinase (idnK) (Escherichia coli (strain K12)).